A 638-amino-acid chain; its full sequence is 1-deoxy-D-xylulose-5-phosphate synthase (638 aa).

Residues His76 and 117 to 119 (AHS) contribute to the thiamine diphosphate site. Asp148 is a binding site for Mg(2+). Thiamine diphosphate is bound by residues 149–150 (GS), Asn177, Tyr287, and Glu369. A Mg(2+)-binding site is contributed by Asn177.

The protein belongs to the transketolase family. DXPS subfamily. Homodimer. It depends on Mg(2+) as a cofactor. The cofactor is thiamine diphosphate.

The enzyme catalyses D-glyceraldehyde 3-phosphate + pyruvate + H(+) = 1-deoxy-D-xylulose 5-phosphate + CO2. It participates in metabolic intermediate biosynthesis; 1-deoxy-D-xylulose 5-phosphate biosynthesis; 1-deoxy-D-xylulose 5-phosphate from D-glyceraldehyde 3-phosphate and pyruvate: step 1/1. Its function is as follows. Catalyzes the acyloin condensation reaction between C atoms 2 and 3 of pyruvate and glyceraldehyde 3-phosphate to yield 1-deoxy-D-xylulose-5-phosphate (DXP). The sequence is that of 1-deoxy-D-xylulose-5-phosphate synthase from Rhodopseudomonas palustris (strain BisB5).